Reading from the N-terminus, the 183-residue chain is Large ribosomal subunit protein uL6 (183 aa).

Belongs to the universal ribosomal protein uL6 family. In terms of assembly, part of the 50S ribosomal subunit.

This protein binds to the 23S rRNA, and is important in its secondary structure. It is located near the subunit interface in the base of the L7/L12 stalk, and near the tRNA binding site of the peptidyltransferase center. The protein is Large ribosomal subunit protein uL6 of Chlamydia felis (strain Fe/C-56) (Chlamydophila felis).